Reading from the N-terminus, the 472-residue chain is Sporozoite surface protein P36p (472 aa).

The N-terminal stretch at 1–23 (MMKRRRIFMYYCFCFLLKYVAFS) is a signal peptide. N-linked (GlcNAc...) asparagine glycosylation is found at Asn24, Asn29, Asn93, Asn112, and Asn185. 6-Cys domains lie at 24 to 157 (NVTN…FKKM) and 160 to 299 (KIKG…TSKN). Cystine bridges form between Cys64-Cys138, Cys81-Cys136, Cys164-Cys188, Cys202-Cys281, and Cys222-Cys279. N-linked (GlcNAc...) asparagine glycosylation is found at Asn295, Asn306, Asn383, Asn396, Asn400, and Asn416. The interval 359 to 385 (KMDPSDEDESNENAHNGNRANKDANYS) is disordered. Residue Ser449 is the site of GPI-anchor amidated serine attachment. Positions 450–472 (SSYYEVFNYFSIAFILIIHMLLW) are cleaved as a propeptide — removed in mature form.

The protein localises to the cell surface. It is found in the cell membrane. In terms of biological role, involved in sporozoite infection of hepatocytes and replication therein. The polypeptide is Sporozoite surface protein P36p (P52) (Plasmodium berghei (strain Anka)).